The chain runs to 316 residues: Apolipoprotein E (316 aa).

An N-terminal signal peptide occupies residues 1-18; sequence MKVLWVALVITLLAGCQA. 8 repeat units span residues 79-100, 101-122, 123-144, 145-166, 167-188, 189-210, 211-232, and 233-254. Residues 79–254 are 8 X 22 AA approximate tandem repeats; sequence VLMDETMKEV…HLEEMREQLE (176 aa). M142 carries the post-translational modification Methionine sulfoxide. Positions 157 to 167 are LDL and other lipoprotein receptors binding; that stretch reads HLRKLRKRLLR. Residue 161 to 164 participates in heparin binding; the sequence is LRKR. The lipid-binding and lipoprotein association stretch occupies residues 209–289; it reads AATVGTLASQ…SWFEPLVEDM (81 aa). A heparin-binding site is contributed by 228 to 235; the sequence is HQKLRGRV. The tract at residues 265-316 is homooligomerization; it reads SQMRLQAEAFQARLKSWFEPLVEDMQRQWAGLVEKVQLAMATSSTSAPSENH. The specificity for association with VLDL stretch occupies residues 277 to 289; sequence RLKSWFEPLVEDM.

Belongs to the apolipoprotein A1/A4/E family. As to quaternary structure, homotetramer. May interact with ABCA1; functionally associated with ABCA1 in the biogenesis of HDLs. May interact with APP/A4 amyloid-beta peptide; the interaction is extremely stable in vitro but its physiological significance is unclear. May interact with MAPT. May interact with MAP2. In the cerebrospinal fluid, interacts with secreted SORL1. Interacts with PMEL; this allows the loading of PMEL luminal fragment on ILVs to induce fibril nucleation. In terms of processing, APOE exists as multiple glycosylated and sialylated glycoforms within cells and in plasma. The extent of glycosylation and sialylation are tissue and context specific. Post-translationally, glycated in plasma VLDL. Phosphorylated by FAM20C in the extracellular medium.

The protein resides in the secreted. It is found in the extracellular space. The protein localises to the extracellular matrix. Its subcellular location is the extracellular vesicle. It localises to the endosome. The protein resides in the multivesicular body. Functionally, APOE is an apolipoprotein, a protein associating with lipid particles, that mainly functions in lipoprotein-mediated lipid transport between organs via the plasma and interstitial fluids. APOE is a core component of plasma lipoproteins and is involved in their production, conversion and clearance. Apolipoproteins are amphipathic molecules that interact both with lipids of the lipoprotein particle core and the aqueous environment of the plasma. As such, APOE associates with chylomicrons, chylomicron remnants, very low density lipoproteins (VLDL) and intermediate density lipoproteins (IDL) but shows a preferential binding to high-density lipoproteins (HDL). It also binds a wide range of cellular receptors including the LDL receptor/LDLR and the very low-density lipoprotein receptor/VLDLR that mediate the cellular uptake of the APOE-containing lipoprotein particles. Finally, APOE also has a heparin-binding activity and binds heparan-sulfate proteoglycans on the surface of cells, a property that supports the capture and the receptor-mediated uptake of APOE-containing lipoproteins by cells. In Lipotes vexillifer (Yangtze river dolphin), this protein is Apolipoprotein E (APOE).